The sequence spans 66 residues: MPKLKSHRGAAKRFRKTASGAIKRRGAYRNHILTKKSTKQKRHLRVEAGTLKPCDARLAERMLHGS.

The segment covering 1–44 (MPKLKSHRGAAKRFRKTASGAIKRRGAYRNHILTKKSTKQKRHL) has biased composition (basic residues). The disordered stretch occupies residues 1-48 (MPKLKSHRGAAKRFRKTASGAIKRRGAYRNHILTKKSTKQKRHLRVEA).

It belongs to the bacterial ribosomal protein bL35 family.

The chain is Large ribosomal subunit protein bL35 from Legionella pneumophila (strain Corby).